The primary structure comprises 408 residues: Argininosuccinate synthase (408 aa).

Residues 9–17 and alanine 36 contribute to the ATP site; that span reads AYSGGLDTS. L-citrulline-binding residues include tyrosine 87 and serine 92. Glycine 117 serves as a coordination point for ATP. L-aspartate contacts are provided by threonine 119, asparagine 123, and aspartate 124. Asparagine 123 contacts L-citrulline. The L-citrulline site is built by arginine 127, serine 176, serine 185, glutamate 261, and tyrosine 273.

The protein belongs to the argininosuccinate synthase family. Type 1 subfamily. Homotetramer.

The protein resides in the cytoplasm. The catalysed reaction is L-citrulline + L-aspartate + ATP = 2-(N(omega)-L-arginino)succinate + AMP + diphosphate + H(+). It participates in amino-acid biosynthesis; L-arginine biosynthesis; L-arginine from L-ornithine and carbamoyl phosphate: step 2/3. This Deinococcus deserti (strain DSM 17065 / CIP 109153 / LMG 22923 / VCD115) protein is Argininosuccinate synthase.